We begin with the raw amino-acid sequence, 400 residues long: Tryptophan synthase beta chain (400 aa).

K92 is subject to N6-(pyridoxal phosphate)lysine.

The protein belongs to the TrpB family. As to quaternary structure, tetramer of two alpha and two beta chains. The cofactor is pyridoxal 5'-phosphate.

The catalysed reaction is (1S,2R)-1-C-(indol-3-yl)glycerol 3-phosphate + L-serine = D-glyceraldehyde 3-phosphate + L-tryptophan + H2O. It functions in the pathway amino-acid biosynthesis; L-tryptophan biosynthesis; L-tryptophan from chorismate: step 5/5. Its function is as follows. The beta subunit is responsible for the synthesis of L-tryptophan from indole and L-serine. The polypeptide is Tryptophan synthase beta chain (Neisseria meningitidis serogroup B (strain ATCC BAA-335 / MC58)).